We begin with the raw amino-acid sequence, 37 residues long: Large ribosomal subunit protein bL36 (37 aa).

Belongs to the bacterial ribosomal protein bL36 family.

This chain is Large ribosomal subunit protein bL36, found in Halothermothrix orenii (strain H 168 / OCM 544 / DSM 9562).